Here is a 308-residue protein sequence, read N- to C-terminus: MGEIKVSPDYNWFRSTVPLKKIIVDDDDSKIWSLYDAGPRSIRCPLIFLPPVSGTADVFFQQILALTGWGYRVIALQYPVYWDHLEFCDGFRKLLDHLQLDKVHLFGASLGGFLAQKFAEYTHKSPRVHSLILCNAFSDTSIFNQTWTANSFWLMPAFMLKKIVLGNFSSGPVDPMMADAIDFMVDRLESLGQSELASRLTLNCQNSYVEPHKIRDIPVTIMDVFDQSALSTEAKEEMYKLYPNARRAHLKTGGNFPYLCRSAEVNLYVQIHLLQFHGTKYAAIDPSVVSAEELEVQKGRLGLSQEEP.

One can recognise an AB hydrolase-1 domain in the interval 87–159; that stretch reads FCDGFRKLLD…NSFWLMPAFM (73 aa). S304 is modified (phosphoserine).

It belongs to the AB hydrolase superfamily. Interacts with CD4. Interacts with ALDH16A1. In terms of tissue distribution, expressed in cell lines FT.1 and in a L cell fibroblast derivative (at protein level).

It localises to the cytoplasm. Its function is as follows. May play a role as a negative regulatory factor in CD4-dependent T-cell activation. This Mus musculus (Mouse) protein is Maspardin (Spg21).